A 30-amino-acid chain; its full sequence is Snaclec coagulation factor IX/factor X-binding protein subunit A (30 aa).

Residues 1 to 30 enclose the C-type lectin domain; sequence DCPSDWSPYEGHCYKHFIKWMNNEDAERFC. Cysteines 2 and 13 form a disulfide.

It belongs to the snaclec family. Heterodimer of subunits A and B; disulfide-linked. In terms of tissue distribution, expressed by the venom gland.

It is found in the secreted. Its function is as follows. Anticoagulant protein which binds to the gamma-carboxyglutamic acid-domain regions of factors IX (F9) and factor X (F10) in the presence of calcium with a 1 to 1 stoichiometry. This Bothrops jararaca (Jararaca) protein is Snaclec coagulation factor IX/factor X-binding protein subunit A.